The sequence spans 179 residues: uncharacterized protein (179 aa).

The stretch at 139-172 (IEDLGKYIKSDRIEKEALREELEKILNTLVKHLE) forms a coiled coil.

This is an uncharacterized protein from Methanocaldococcus jannaschii (strain ATCC 43067 / DSM 2661 / JAL-1 / JCM 10045 / NBRC 100440) (Methanococcus jannaschii).